Here is a 345-residue protein sequence, read N- to C-terminus: Eukaryotic translation initiation factor 3 subunit F (345 aa).

An MPN domain is found at 30 to 166; that stretch reads VVIQPQALFS…TRAYISAPVG (137 aa). Residues 308–345 are disordered; sequence GGESGSTESGQRGGQRGGKGGRGGQQRNQERSGEEVRA. The span at 318-331 shows a compositional bias: gly residues; the sequence is QRGGQRGGKGGRGG. Basic and acidic residues predominate over residues 335-345; the sequence is NQERSGEEVRA.

This sequence belongs to the eIF-3 subunit F family. As to quaternary structure, component of the eukaryotic translation initiation factor 3 (eIF-3) complex.

It is found in the cytoplasm. Functionally, component of the eukaryotic translation initiation factor 3 (eIF-3) complex, which is involved in protein synthesis of a specialized repertoire of mRNAs and, together with other initiation factors, stimulates binding of mRNA and methionyl-tRNAi to the 40S ribosome. The eIF-3 complex specifically targets and initiates translation of a subset of mRNAs involved in cell proliferation. The chain is Eukaryotic translation initiation factor 3 subunit F from Aspergillus terreus (strain NIH 2624 / FGSC A1156).